The primary structure comprises 526 residues: Peptide chain release factor 3 (526 aa).

In terms of domain architecture, tr-type G spans 8–277 (SKRRTFAIIS…GLTRWAPAPQ (270 aa)). GTP contacts are provided by residues 17–24 (SHPDAGKT), 85–89 (DTPGH), and 139–142 (NKLD).

This sequence belongs to the TRAFAC class translation factor GTPase superfamily. Classic translation factor GTPase family. PrfC subfamily.

It is found in the cytoplasm. Its function is as follows. Increases the formation of ribosomal termination complexes and stimulates activities of RF-1 and RF-2. It binds guanine nucleotides and has strong preference for UGA stop codons. It may interact directly with the ribosome. The stimulation of RF-1 and RF-2 is significantly reduced by GTP and GDP, but not by GMP. This Vibrio atlanticus (strain LGP32) (Vibrio splendidus (strain Mel32)) protein is Peptide chain release factor 3.